The following is a 494-amino-acid chain: Glycerol kinase (494 aa).

Residue T12 participates in ADP binding. ATP is bound by residues T12, T13, and S14. Residue T12 participates in sn-glycerol 3-phosphate binding. R16 serves as a coordination point for ADP. The sn-glycerol 3-phosphate site is built by R82, E83, Y135, and D244. Glycerol contacts are provided by R82, E83, Y135, D244, and Q245. ADP contacts are provided by T266 and G309. T266, G309, Q313, and G409 together coordinate ATP. Residues G409 and N413 each coordinate ADP.

This sequence belongs to the FGGY kinase family.

It carries out the reaction glycerol + ATP = sn-glycerol 3-phosphate + ADP + H(+). It functions in the pathway polyol metabolism; glycerol degradation via glycerol kinase pathway; sn-glycerol 3-phosphate from glycerol: step 1/1. With respect to regulation, inhibited by fructose 1,6-bisphosphate (FBP). In terms of biological role, key enzyme in the regulation of glycerol uptake and metabolism. Catalyzes the phosphorylation of glycerol to yield sn-glycerol 3-phosphate. The protein is Glycerol kinase of Alteromonas mediterranea (strain DSM 17117 / CIP 110805 / LMG 28347 / Deep ecotype).